The following is a 122-amino-acid chain: Large ribosomal subunit protein uL14 (122 aa).

Belongs to the universal ribosomal protein uL14 family. In terms of assembly, part of the 50S ribosomal subunit. Forms a cluster with proteins L3 and L19. In the 70S ribosome, L14 and L19 interact and together make contacts with the 16S rRNA in bridges B5 and B8.

Functionally, binds to 23S rRNA. Forms part of two intersubunit bridges in the 70S ribosome. The sequence is that of Large ribosomal subunit protein uL14 from Streptomyces avermitilis (strain ATCC 31267 / DSM 46492 / JCM 5070 / NBRC 14893 / NCIMB 12804 / NRRL 8165 / MA-4680).